A 330-amino-acid polypeptide reads, in one-letter code: Methionyl-tRNA formyltransferase (330 aa).

Ser121–Pro124 lines the (6S)-5,6,7,8-tetrahydrofolate pocket.

Belongs to the Fmt family.

The enzyme catalyses L-methionyl-tRNA(fMet) + (6R)-10-formyltetrahydrofolate = N-formyl-L-methionyl-tRNA(fMet) + (6S)-5,6,7,8-tetrahydrofolate + H(+). In terms of biological role, attaches a formyl group to the free amino group of methionyl-tRNA(fMet). The formyl group appears to play a dual role in the initiator identity of N-formylmethionyl-tRNA by promoting its recognition by IF2 and preventing the misappropriation of this tRNA by the elongation apparatus. The chain is Methionyl-tRNA formyltransferase from Burkholderia cenocepacia (strain ATCC BAA-245 / DSM 16553 / LMG 16656 / NCTC 13227 / J2315 / CF5610) (Burkholderia cepacia (strain J2315)).